The primary structure comprises 397 residues: DnaJ homolog subfamily A member 1 (397 aa).

Residues 6-68 (TYYDVLGVKP…KKRELYDKGG (63 aa)) enclose the J domain. Residue Lys-66 is modified to N6-acetyllysine. At Ser-83 the chain carries Phosphoserine. Residues 121 to 205 (GATRKLALQK…CNGRKIVREK (85 aa)) form a CR-type zinc finger. Cys-134, Cys-137, Cys-150, Cys-153, Cys-177, Cys-180, Cys-193, and Cys-196 together coordinate Zn(2+). CXXCXGXG motif repeat units follow at residues 134-141 (CDKCEGRG), 150-157 (CPNCRGTG), 177-184 (CMECQGHG), and 193-200 (CKSCNGRK). Ser-335 bears the Phosphoserine mark. Residues 352–397 (VEETDEMDQVELVDFDPNQERRRHYNGEAYEDDEHHPRGGVQCQTS) are disordered. Acidic residues predominate over residues 353-365 (EETDEMDQVELVD). Phosphotyrosine is present on Tyr-381. Residue Cys-394 is modified to Cysteine methyl ester. Residue Cys-394 is the site of S-farnesyl cysteine attachment. Positions 395-397 (QTS) are cleaved as a propeptide — removed in mature form.

In terms of assembly, identified in a complex with HSPA1B and BAX. Interacts with RNF207.

The protein localises to the membrane. The protein resides in the cytoplasm. It is found in the microsome. Its subcellular location is the mitochondrion. It localises to the nucleus. The protein localises to the perinuclear region. Co-chaperone for HSPA8/Hsc70. Plays a role in protein transport into mitochondria via its role as co-chaperone. Stimulates ATP hydrolysis, but not the folding of unfolded proteins mediated by HSPA1A (in vitro). Promotes apoptosis in response to cellular stress mediated by exposure to anisomycin or UV. Functions as co-chaperone for HSPA1B and negatively regulates the translocation of BAX from the cytosol to mitochondria in response to cellular stress, thereby protecting cells against apoptosis. In Mus musculus (Mouse), this protein is DnaJ homolog subfamily A member 1 (Dnaja1).